Consider the following 975-residue polypeptide: Leucine-zipper-like transcriptional regulator 1 homolog (975 aa).

Residues 16–32 (RGGGGGGCGGGGAGGSA) show a composition bias toward gly residues. Disordered regions lie at residues 16–41 (RGGGGGGCGGGGAGGSASGSRSTSGS) and 158–186 (MSSSMRSSRGNGGGGAASSSHPPGSSCSS). The segment covering 174–186 (ASSSHPPGSSCSS) has biased composition (low complexity). 6 Kelch repeats span residues 263 to 312 (AMFV…VAGS), 314 to 369 (MFIF…VYDN), 370 to 417 (KMWI…PVAV), 421 to 467 (AMYV…PSRR), 478 to 524 (FLYV…FHAS), and 530 to 581 (AMYI…FIVG). 2 consecutive BTB domains span residues 574-670 (CDIQ…DLKD) and 801-870 (CDIS…KMPP).

It belongs to the LZTR1 family. In terms of assembly, component of some BCR (BTB-CUL3-RBX1) E3 ubiquitin-protein ligase complex. Expressed in Rdl-expressing neurons of the mushroom body, the neurons projecting to the LC9 optic glomerulus and in a neuronal cluster near the subesophageal ganglion (at protein level).

It functions in the pathway protein modification; protein ubiquitination. Its function is as follows. Inhibitor of Ras signaling. Acts as a substrate-specific adapter of a BCR (BTB-CUL3-RBX1) E3 ubiquitin-protein ligase complex that mediates ubiquitination of Ras. Together with Nf1, plays an important role for normal sleep behavior, mainly during the night. Might affect sleep by modulating GABA signaling in Rdl-expressing neurons. Might play a role in the regulation of brain glycogen metabolism and organismal levels of triglycerides. The chain is Leucine-zipper-like transcriptional regulator 1 homolog from Drosophila melanogaster (Fruit fly).